The following is a 294-amino-acid chain: MDASQKAGLIKKLREITNSGFLDCKKALEETNYDLDKAIEWLQENGKAKAAKKSGRIAAEGLVRASVKGKSAVIFELNSETDFVARNKEFLDLMDNISEALVENSFQSMESAENIFMENDLTILEATTKATATIGEKISFRRAKKFDLLEDQTIGAYTHANGRIASLFLVRGKNEEVAKNVAMHIAAMNPEYMSANEVPQEKIEKLKAEFLKSPALAGKPEKIQQSILSGMLNKALAEFVLLNQPFVMESSLSVEQYLKNNKSEALEMIRYEVGEGIEKKAVDFASEVAAQMKK.

Positions 81 to 84 (TDFV) are involved in Mg(2+) ion dislocation from EF-Tu.

It belongs to the EF-Ts family.

The protein localises to the cytoplasm. Its function is as follows. Associates with the EF-Tu.GDP complex and induces the exchange of GDP to GTP. It remains bound to the aminoacyl-tRNA.EF-Tu.GTP complex up to the GTP hydrolysis stage on the ribosome. The protein is Elongation factor Ts (tsf) of Mycoplasmopsis pulmonis (strain UAB CTIP) (Mycoplasma pulmonis).